Consider the following 179-residue polypeptide: Large ribosomal subunit protein uL6 (179 aa).

Belongs to the universal ribosomal protein uL6 family. In terms of assembly, part of the 50S ribosomal subunit.

In terms of biological role, this protein binds to the 23S rRNA, and is important in its secondary structure. It is located near the subunit interface in the base of the L7/L12 stalk, and near the tRNA binding site of the peptidyltransferase center. The chain is Large ribosomal subunit protein uL6 from Gloeothece citriformis (strain PCC 7424) (Cyanothece sp. (strain PCC 7424)).